The following is an 89-amino-acid chain: Defensin-like protein 250 (89 aa).

A signal peptide spans Met1–Ala23. Cystine bridges form between Cys29–Cys86, Cys40–Cys69, Cys48–Cys79, and Cys67–Cys81.

Belongs to the DEFL family.

It is found in the secreted. This Arabidopsis thaliana (Mouse-ear cress) protein is Defensin-like protein 250 (SCRL8).